Consider the following 190-residue polypeptide: Xanthine phosphoribosyltransferase (190 aa).

Leu-20 and Asn-27 together coordinate xanthine. 128 to 132 (ANGHA) lines the 5-phospho-alpha-D-ribose 1-diphosphate pocket. Lys-156 contacts xanthine.

This sequence belongs to the purine/pyrimidine phosphoribosyltransferase family. Xpt subfamily. In terms of assembly, homodimer.

The protein resides in the cytoplasm. It carries out the reaction XMP + diphosphate = xanthine + 5-phospho-alpha-D-ribose 1-diphosphate. Its pathway is purine metabolism; XMP biosynthesis via salvage pathway; XMP from xanthine: step 1/1. Its function is as follows. Converts the preformed base xanthine, a product of nucleic acid breakdown, to xanthosine 5'-monophosphate (XMP), so it can be reused for RNA or DNA synthesis. In Pseudomonas aeruginosa (strain ATCC 15692 / DSM 22644 / CIP 104116 / JCM 14847 / LMG 12228 / 1C / PRS 101 / PAO1), this protein is Xanthine phosphoribosyltransferase.